Here is a 392-residue protein sequence, read N- to C-terminus: Acyl-CoA dehydrogenase IpdE1 (392 aa).

Residues 126–129 (QGYS) and S171 each bind FAD. Catalysis depends on E254, which acts as the Proton acceptor. FAD is bound at residue 371 to 373 (SNE).

Belongs to the acyl-CoA dehydrogenase family. Heterotetramer composed of 2 IpdE1 subunits and 2 IpdE2 subunits. The cofactor is FAD.

The enzyme catalyses 3-[(3aS,4S,5R,7aS)-5-hydroxy-7a-methyl-1-oxo-octahydro-1H-inden-4-yl]propanoyl-CoA + A = (2E)-3-[(3aS,4S,5R,7aS)-5-hydroxy-7a-methyl-1-oxo-octahydro-1H-inden-4-yl]prop-2-enoyl-CoA + AH2. It functions in the pathway steroid metabolism; cholesterol degradation. In terms of biological role, involved in cholesterol degradation. Catalyzes the dehydrogenation of 5OH-HIP-CoA to 5OH-HIPE-CoA. The sequence is that of Acyl-CoA dehydrogenase IpdE1 from Mycolicibacterium smegmatis (strain ATCC 700084 / mc(2)155) (Mycobacterium smegmatis).